A 271-amino-acid polypeptide reads, in one-letter code: 4-hydroxy-tetrahydrodipicolinate reductase (271 aa).

NAD(+) contacts are provided by residues 10 to 15 (GAGGRM), E36, 100 to 102 (GTT), and 124 to 127 (SGNM). H157 acts as the Proton donor/acceptor in catalysis. Position 158 (H158) interacts with (S)-2,3,4,5-tetrahydrodipicolinate. K161 serves as the catalytic Proton donor. 167–168 (GT) contributes to the (S)-2,3,4,5-tetrahydrodipicolinate binding site.

The protein belongs to the DapB family.

The protein localises to the cytoplasm. It carries out the reaction (S)-2,3,4,5-tetrahydrodipicolinate + NAD(+) + H2O = (2S,4S)-4-hydroxy-2,3,4,5-tetrahydrodipicolinate + NADH + H(+). The enzyme catalyses (S)-2,3,4,5-tetrahydrodipicolinate + NADP(+) + H2O = (2S,4S)-4-hydroxy-2,3,4,5-tetrahydrodipicolinate + NADPH + H(+). The protein operates within amino-acid biosynthesis; L-lysine biosynthesis via DAP pathway; (S)-tetrahydrodipicolinate from L-aspartate: step 4/4. In terms of biological role, catalyzes the conversion of 4-hydroxy-tetrahydrodipicolinate (HTPA) to tetrahydrodipicolinate. In Rhodopseudomonas palustris (strain ATCC BAA-98 / CGA009), this protein is 4-hydroxy-tetrahydrodipicolinate reductase.